The sequence spans 90 residues: Acylphosphatase (90 aa).

Residues 3–90 (KKQFVVYGIV…HSFGLFSVEH (88 aa)) enclose the Acylphosphatase-like domain. Active-site residues include Arg18 and Asn36.

This sequence belongs to the acylphosphatase family.

The catalysed reaction is an acyl phosphate + H2O = a carboxylate + phosphate + H(+). The sequence is that of Acylphosphatase (acyP) from Mannheimia succiniciproducens (strain KCTC 0769BP / MBEL55E).